We begin with the raw amino-acid sequence, 672 residues long: uncharacterized protein (672 aa).

Positions 1–24 are cleaved as a signal peptide; the sequence is MKTLKVLKIFIIVYISSVSLESFA. The next 2 membrane-spanning stretches (helical) occupy residues 226–246 and 254–274; these read IIGA…ALNK and ITLF…LGPL. The span at 363 to 372 shows a compositional bias: polar residues; the sequence is SNGTSGNNKP. The interval 363–384 is disordered; it reads SNGTSGNNKPIPNFDPDGKKDR. 4 helical membrane-spanning segments follow: residues 410–430, 436–456, 469–489, and 562–582; these read IILV…LYFI, CMVT…MVLF, VCIS…LLIT, and VVSI…FYYF. Basic and acidic residues predominate over residues 628 to 646; it reads HGKSSLGDKPDIGNKRKDG. Positions 628–672 are disordered; the sequence is HGKSSLGDKPDIGNKRKDGAQQGEDAVNSSGGEVADLASGSGGGK.

The protein belongs to the TrbL/VirB6 family.

The protein localises to the cell membrane. This is an uncharacterized protein from Rickettsia prowazekii (strain Madrid E).